A 363-amino-acid polypeptide reads, in one-letter code: Phosphoserine aminotransferase (363 aa).

Arg42 is an L-glutamate binding site. Residues 76–77, Trp102, Thr156, Asp175, and Gln198 each bind pyridoxal 5'-phosphate; that span reads GR. Lys199 bears the N6-(pyridoxal phosphate)lysine mark. Residue 240-241 coordinates pyridoxal 5'-phosphate; it reads NT.

The protein belongs to the class-V pyridoxal-phosphate-dependent aminotransferase family. SerC subfamily. Homodimer. It depends on pyridoxal 5'-phosphate as a cofactor.

The protein localises to the cytoplasm. The enzyme catalyses O-phospho-L-serine + 2-oxoglutarate = 3-phosphooxypyruvate + L-glutamate. It carries out the reaction 4-(phosphooxy)-L-threonine + 2-oxoglutarate = (R)-3-hydroxy-2-oxo-4-phosphooxybutanoate + L-glutamate. It participates in amino-acid biosynthesis; L-serine biosynthesis; L-serine from 3-phospho-D-glycerate: step 2/3. The protein operates within cofactor biosynthesis; pyridoxine 5'-phosphate biosynthesis; pyridoxine 5'-phosphate from D-erythrose 4-phosphate: step 3/5. In terms of biological role, catalyzes the reversible conversion of 3-phosphohydroxypyruvate to phosphoserine and of 3-hydroxy-2-oxo-4-phosphonooxybutanoate to phosphohydroxythreonine. The polypeptide is Phosphoserine aminotransferase (Shewanella baltica (strain OS195)).